Reading from the N-terminus, the 536-residue chain is CTP synthase (536 aa).

Positions 1-268 (MKSKFIFITG…GKVLCKLFNI (268 aa)) are amidoligase domain. Position 14 (Ser-14) interacts with CTP. A UTP-binding site is contributed by Ser-14. Position 15-20 (15-20 (SLGKGL)) interacts with ATP. Tyr-55 serves as a coordination point for L-glutamine. Asp-72 serves as a coordination point for ATP. Residues Asp-72 and Glu-142 each contribute to the Mg(2+) site. Residues 149 to 151 (DIE), 189 to 194 (KTKPMQ), and Lys-225 contribute to the CTP site. Residues 189-194 (KTKPMQ) and Lys-225 each bind UTP. The Glutamine amidotransferase type-1 domain occupies 293–535 (TIALVGKYVE…IKAAVDNKIN (243 aa)). Gly-356 contributes to the L-glutamine binding site. Cys-383 serves as the catalytic Nucleophile; for glutamine hydrolysis. L-glutamine is bound by residues 384 to 387 (LGMQ), Glu-407, and Arg-463. Active-site residues include His-508 and Glu-510.

The protein belongs to the CTP synthase family. As to quaternary structure, homotetramer.

The enzyme catalyses UTP + L-glutamine + ATP + H2O = CTP + L-glutamate + ADP + phosphate + 2 H(+). It carries out the reaction L-glutamine + H2O = L-glutamate + NH4(+). It catalyses the reaction UTP + NH4(+) + ATP = CTP + ADP + phosphate + 2 H(+). It participates in pyrimidine metabolism; CTP biosynthesis via de novo pathway; CTP from UDP: step 2/2. Allosterically activated by GTP, when glutamine is the substrate; GTP has no effect on the reaction when ammonia is the substrate. The allosteric effector GTP functions by stabilizing the protein conformation that binds the tetrahedral intermediate(s) formed during glutamine hydrolysis. Inhibited by the product CTP, via allosteric rather than competitive inhibition. Functionally, catalyzes the ATP-dependent amination of UTP to CTP with either L-glutamine or ammonia as the source of nitrogen. Regulates intracellular CTP levels through interactions with the four ribonucleotide triphosphates. The chain is CTP synthase from Treponema denticola (strain ATCC 35405 / DSM 14222 / CIP 103919 / JCM 8153 / KCTC 15104).